The sequence spans 417 residues: Tumor necrosis factor receptor superfamily member 25 (417 aa).

The N-terminal stretch at 1–24 (MEQRPRGCAAVAAALLLVLLGARA) is a signal peptide. Over 25–199 (QGGTRSPRCD…RCAAVCGWRQ (175 aa)) the chain is Extracellular. TNFR-Cys repeat units follow at residues 34–71 (DCAGDFHKKIGLFCCRGCPAGHYLKAPCTEPCGNSTCL), 72–115 (VCPQ…DTRC), 116–163 (GCKP…TDCG), and 164–192 (TCLPGFYEHGDGCVSCPTSTLGSCPERCA). Intrachain disulfides connect cysteine 35-cysteine 47, cysteine 48-cysteine 61, cysteine 51-cysteine 70, cysteine 73-cysteine 89, cysteine 92-cysteine 107, cysteine 95-cysteine 115, cysteine 117-cysteine 130, cysteine 138-cysteine 155, cysteine 141-cysteine 162, cysteine 165-cysteine 176, cysteine 179-cysteine 191, and cysteine 187-cysteine 195. Asparagine 67 carries N-linked (GlcNAc...) asparagine glycosylation. Asparagine 106 carries an N-linked (GlcNAc...) asparagine glycan. Residues 200–220 (MFWVQVLLAGLVVPLLLGATL) traverse the membrane as a helical segment. Residues 221 to 417 (TYTYRHCWPH…DLRSRLQRGP (197 aa)) are Cytoplasmic-facing. The Death domain occupies 332–413 (GPQLYDVMDA…GCVEDLRSRL (82 aa)). The (Microbial infection) N-beta-linked (GlcNAc) arginine glycan is linked to arginine 352.

Homodimer. Interacts strongly via the death domains with TNFRSF1 and TRADD to activate at least two distinct signaling cascades, apoptosis and NF-kappa-B signaling. Interacts with BAG4. In terms of processing, (Microbial infection) Glycosylated at Arg-352 by enteropathogenic E.coli protein NleB1. Glycosylated. Abundantly expressed in thymocytes and lymphocytes. Detected in lymphocyte-rich tissues such as thymus, colon, intestine, and spleen. Also found in the prostate.

Its subcellular location is the cell membrane. The protein localises to the secreted. Its function is as follows. Receptor for TNFSF12/APO3L/TWEAK. Interacts directly with the adapter TRADD. Mediates activation of NF-kappa-B and induces apoptosis. May play a role in regulating lymphocyte homeostasis. The protein is Tumor necrosis factor receptor superfamily member 25 (TNFRSF25) of Homo sapiens (Human).